We begin with the raw amino-acid sequence, 84 residues long: LYR motif-containing protein 4B (84 aa).

This sequence belongs to the complex I LYR family.

In Salmo salar (Atlantic salmon), this protein is LYR motif-containing protein 4B (lyrm4b).